The following is a 1060-amino-acid chain: Carbamoyl phosphate synthase large chain (1060 aa).

Residues 1 to 401 (MPKRTDIKKI…SLLKAVRSLE (401 aa)) are carboxyphosphate synthetic domain. ATP is bound by residues R129, R169, G175, G176, K208, I210, E215, G241, I242, H243, Q284, and E298. An ATP-grasp 1 domain is found at 133-327 (KQLMEELEQP…IAKLAAKIAV (195 aa)). Q284, E298, and N300 together coordinate Mg(2+). The Mn(2+) site is built by Q284, E298, and N300. The interval 402–546 (IGAYHNELAE…YSTYEVENES (145 aa)) is oligomerization domain. The interval 547–929 (NVSKKPSVLV…ALYKAFEASG (383 aa)) is carbamoyl phosphate synthetic domain. The region spanning 671–861 (EQALQELAIP…MAQVATKAIL (191 aa)) is the ATP-grasp 2 domain. R707, S746, L748, E752, G777, V778, H779, S780, Q820, and E832 together coordinate ATP. Q820, E832, and N834 together coordinate Mg(2+). Mn(2+) contacts are provided by Q820, E832, and N834. Positions 930–1060 (LHLPSYGAVL…ESRAFTTEAI (131 aa)) constitute an MGS-like domain. Residues 930 to 1060 (LHLPSYGAVL…ESRAFTTEAI (131 aa)) form an allosteric domain region.

Belongs to the CarB family. In terms of assembly, composed of two chains; the small (or glutamine) chain promotes the hydrolysis of glutamine to ammonia, which is used by the large (or ammonia) chain to synthesize carbamoyl phosphate. Tetramer of heterodimers (alpha,beta)4. The cofactor is Mg(2+). Mn(2+) serves as cofactor.

It carries out the reaction hydrogencarbonate + L-glutamine + 2 ATP + H2O = carbamoyl phosphate + L-glutamate + 2 ADP + phosphate + 2 H(+). The catalysed reaction is hydrogencarbonate + NH4(+) + 2 ATP = carbamoyl phosphate + 2 ADP + phosphate + 2 H(+). It functions in the pathway amino-acid biosynthesis; L-arginine biosynthesis; carbamoyl phosphate from bicarbonate: step 1/1. Its pathway is pyrimidine metabolism; UMP biosynthesis via de novo pathway; (S)-dihydroorotate from bicarbonate: step 1/3. Functionally, large subunit of the glutamine-dependent carbamoyl phosphate synthetase (CPSase). CPSase catalyzes the formation of carbamoyl phosphate from the ammonia moiety of glutamine, carbonate, and phosphate donated by ATP, constituting the first step of 2 biosynthetic pathways, one leading to arginine and/or urea and the other to pyrimidine nucleotides. The large subunit (synthetase) binds the substrates ammonia (free or transferred from glutamine from the small subunit), hydrogencarbonate and ATP and carries out an ATP-coupled ligase reaction, activating hydrogencarbonate by forming carboxy phosphate which reacts with ammonia to form carbamoyl phosphate. This chain is Carbamoyl phosphate synthase large chain, found in Enterococcus faecalis (strain ATCC 700802 / V583).